The following is a 229-amino-acid chain: Large ribosomal subunit protein bL25 (229 aa).

2 disordered regions span residues 1 to 21 (MSDALTLPAEARERAGKGASR) and 187 to 229 (PSAL…KGDD). The segment covering 196–207 (SEEEEDGEEVDA) has biased composition (acidic residues).

This sequence belongs to the bacterial ribosomal protein bL25 family. CTC subfamily. As to quaternary structure, part of the 50S ribosomal subunit; part of the 5S rRNA/L5/L18/L25 subcomplex. Contacts the 5S rRNA. Binds to the 5S rRNA independently of L5 and L18.

Its function is as follows. This is one of the proteins that binds to the 5S RNA in the ribosome where it forms part of the central protuberance. The sequence is that of Large ribosomal subunit protein bL25 from Erythrobacter litoralis (strain HTCC2594).